The sequence spans 332 residues: Decaprenyl-phosphate phosphoribosyltransferase (332 aa).

Positions 1-12 are enriched in basic and acidic residues; sequence MSEHAAEHHRDT. The tract at residues 1–36 is disordered; that stretch reads MSEHAAEHHRDTQNFLTSEPHTTAIEDNKKRQPPKN. The next 2 membrane-spanning stretches (helical) occupy residues 50–70 and 74–94; these read WVKNVLVLAAPLAAGADAIFN and IIDVAIAFVVFCFGASAIYLV. 2 residues coordinate 5-phospho-alpha-D-ribose 1-diphosphate: lysine 52 and tyrosine 92. Positions 95 and 99 each coordinate Mg(2+). Lysine 109 lines the 5-phospho-alpha-D-ribose 1-diphosphate pocket. Helical transmembrane passes span 114–134 and 146–166; these read IAAGVLPVGMAYGMAVALIAL and VALACVIGVYIALQLGYCFGW. Lysine 167 and arginine 184 together coordinate 5-phospho-alpha-D-ribose 1-diphosphate. 2 helical membrane passes run 169–189 and 190–210; these read MPVIDIALVSSGFMLRAMAGG and VAAGIELSQWFLLVAAFGSLF. A trans,octa-cis-decaprenyl phosphate-binding site is contributed by lysine 215. The next 3 membrane-spanning stretches (helical) occupy residues 244-264, 273-293, and 310-330; these read FVWTMAATAVVMSYALWGFDL, PWYQISMVPFTIAILRYAAGV, and VLQVLALAWVFCIVMAVYIMP.

This sequence belongs to the UbiA prenyltransferase family. DPPR synthase subfamily. Mg(2+) serves as cofactor.

It localises to the cell inner membrane. The catalysed reaction is trans,octa-cis-decaprenyl phosphate + 5-phospho-alpha-D-ribose 1-diphosphate + H(+) = trans,octa-cis-decaprenylphospho-beta-D-ribofuranose 5-phosphate + diphosphate. It functions in the pathway cell wall biogenesis; cell wall polysaccharide biosynthesis. Functionally, involved in the biosynthesis of decaprenylphosphoryl arabinose (DPA) a precursor for arabinan synthesis in mycobacterial cell wall biosynthesis. Catalyzes the transfer of a 5-phosphoribosyl residue from phosphoribose diphosphate (PRPP) to decaprenyl phosphate (DP) to form decaprenylphosphoryl-5-phosphoribose (DPPR). The sequence is that of Decaprenyl-phosphate phosphoribosyltransferase from Corynebacterium glutamicum (strain ATCC 13032 / DSM 20300 / JCM 1318 / BCRC 11384 / CCUG 27702 / LMG 3730 / NBRC 12168 / NCIMB 10025 / NRRL B-2784 / 534).